We begin with the raw amino-acid sequence, 180 residues long: NAD(P)H-quinone oxidoreductase subunit I, chloroplastic (180 aa).

4Fe-4S ferredoxin-type domains lie at 55 to 84 (GRIHFEFDKCIACEVCVRVCPIDLPVVNWR) and 95 to 124 (LNYSIDFGICIFCGNCVEYCPTNCLSMTEE). 8 residues coordinate [4Fe-4S] cluster: Cys-64, Cys-67, Cys-70, Cys-74, Cys-104, Cys-107, Cys-110, and Cys-114.

Belongs to the complex I 23 kDa subunit family. NDH is composed of at least 16 different subunits, 5 of which are encoded in the nucleus. The cofactor is [4Fe-4S] cluster.

It localises to the plastid. The protein resides in the chloroplast thylakoid membrane. It carries out the reaction a plastoquinone + NADH + (n+1) H(+)(in) = a plastoquinol + NAD(+) + n H(+)(out). The catalysed reaction is a plastoquinone + NADPH + (n+1) H(+)(in) = a plastoquinol + NADP(+) + n H(+)(out). In terms of biological role, NDH shuttles electrons from NAD(P)H:plastoquinone, via FMN and iron-sulfur (Fe-S) centers, to quinones in the photosynthetic chain and possibly in a chloroplast respiratory chain. The immediate electron acceptor for the enzyme in this species is believed to be plastoquinone. Couples the redox reaction to proton translocation, and thus conserves the redox energy in a proton gradient. The chain is NAD(P)H-quinone oxidoreductase subunit I, chloroplastic from Platanus occidentalis (Sycamore).